The sequence spans 310 residues: tRNA dimethylallyltransferase (310 aa).

13–20 (GPTASGKT) contributes to the ATP binding site. A substrate-binding site is contributed by 15 to 20 (TASGKT). 4 interaction with substrate tRNA regions span residues 38–41 (DSAL), 162–166 (QRLSR), 243–248 (RCVGYR), and 276–283 (KRQITWLR).

This sequence belongs to the IPP transferase family. In terms of assembly, monomer. Mg(2+) is required as a cofactor.

It carries out the reaction adenosine(37) in tRNA + dimethylallyl diphosphate = N(6)-dimethylallyladenosine(37) in tRNA + diphosphate. Functionally, catalyzes the transfer of a dimethylallyl group onto the adenine at position 37 in tRNAs that read codons beginning with uridine, leading to the formation of N6-(dimethylallyl)adenosine (i(6)A). This chain is tRNA dimethylallyltransferase, found in Aliivibrio fischeri (strain ATCC 700601 / ES114) (Vibrio fischeri).